A 718-amino-acid polypeptide reads, in one-letter code: Cyclomaltodextrin glucanotransferase (718 aa).

The first 34 residues, 1–34, serve as a signal peptide directing secretion; sequence MFQMAKRVLLSTTLTFSLLAGSALPFLPASAIYA. The interval 35–172 is A1; the sequence is DADTAVTNKQ…GIKIIIDFAP (138 aa). 4 residues coordinate Ca(2+): D61, N63, N66, and N67. C77 and C84 form a disulfide bridge. 2 residues coordinate Ca(2+): G85 and D87. 134–135 contacts substrate; it reads YW. N173 lines the Ca(2+) pocket. A b region spans residues 173 to 236; it reads NHTSPAMETD…NLYDLADLNH (64 aa). Residue H174 participates in substrate binding. Position 224 (I224) interacts with Ca(2+). Residue 227–230 participates in substrate binding; the sequence is NLYD. Position 233 (D233) interacts with Ca(2+). An A2 region spans residues 237–440; the sequence is NNSTIDTYFK…LRKSNPAIAY (204 aa). A substrate-binding site is contributed by R261. D263 serves as the catalytic Nucleophile. 266-267 contacts substrate; it reads KH. Residue H267 coordinates Ca(2+). Residue E291 is the Proton donor of the active site. Positions 361, 405, and 409 each coordinate substrate. The tract at residues 441-528 is c; the sequence is GSTQQRWINN…ATAVWQYTAS (88 aa). A d region spans residues 529 to 614; it reads ETTPTIGHVG…SNAYNDFTIL (86 aa). The region spanning 532-612 is the IPT/TIG domain; it reads PTIGHVGPVM…VNSNAYNDFT (81 aa). The CBM20 domain maps to 613–718; sequence ILSGDQVSVR…GTATVTINWQ (106 aa). Positions 615-718 are e; sequence SGDQVSVRFV…GTATVTINWQ (104 aa).

The protein belongs to the glycosyl hydrolase 13 family. In terms of assembly, monomer. The cofactor is Ca(2+).

The protein localises to the secreted. It catalyses the reaction Cyclizes part of a (1-&gt;4)-alpha-D-glucan chain by formation of a (1-&gt;4)-alpha-D-glucosidic bond.. This is Cyclomaltodextrin glucanotransferase (cgtA) from Bacillus licheniformis.